The sequence spans 532 residues: Putative 57 kDa heat shock protein (532 aa).

2 consecutive sHSP domains span residues 25–134 (VNGP…CKIT) and 439–532 (SVLE…IPSN).

This sequence belongs to the small heat shock protein (HSP20) family.

This Arabidopsis thaliana (Mouse-ear cress) protein is Putative 57 kDa heat shock protein.